The chain runs to 83 residues: Retinal cone rhodopsin-sensitive cGMP 3',5'-cyclic phosphodiesterase subunit gamma (83 aa).

The disordered stretch occupies residues 1–54 (MSDSPSLSPPAPSQGPTTPRKGPPKFKQRQTRQFKSKPPKKGVKGFGDDIPGME). Residues 22–43 (GPPKFKQRQTRQFKSKPPKKGV) are compositionally biased toward basic residues.

Belongs to the rod/cone cGMP-PDE gamma subunit family. In terms of assembly, tetramer composed of two catalytic chains (alpha and beta), and two inhibitory chains (gamma).

It carries out the reaction 3',5'-cyclic GMP + H2O = GMP + H(+). Its function is as follows. Participates in processes of transmission and amplification of the visual signal. cGMP-PDEs are the effector molecules in G-protein-mediated phototransduction in vertebrate rods and cones. This is Retinal cone rhodopsin-sensitive cGMP 3',5'-cyclic phosphodiesterase subunit gamma (Pde6h) from Mus musculus (Mouse).